The primary structure comprises 181 residues: Ribosome maturation factor RimP (181 aa).

It belongs to the RimP family.

It is found in the cytoplasm. Its function is as follows. Required for maturation of 30S ribosomal subunits. In Mycolicibacterium smegmatis (strain ATCC 700084 / mc(2)155) (Mycobacterium smegmatis), this protein is Ribosome maturation factor RimP.